Reading from the N-terminus, the 210-residue chain is FMN-dependent NADH:quinone oxidoreductase (210 aa).

Residues 17–19, 102–105, and 148–151 each bind FMN; these read SRS, MWNL, and SCGG.

Belongs to the azoreductase type 1 family. As to quaternary structure, homodimer. The cofactor is FMN.

It carries out the reaction 2 a quinone + NADH + H(+) = 2 a 1,4-benzosemiquinone + NAD(+). The catalysed reaction is N,N-dimethyl-1,4-phenylenediamine + anthranilate + 2 NAD(+) = 2-(4-dimethylaminophenyl)diazenylbenzoate + 2 NADH + 2 H(+). Quinone reductase that provides resistance to thiol-specific stress caused by electrophilic quinones. Functionally, also exhibits azoreductase activity. Catalyzes the reductive cleavage of the azo bond in aromatic azo compounds to the corresponding amines. This Trichlorobacter lovleyi (strain ATCC BAA-1151 / DSM 17278 / SZ) (Geobacter lovleyi) protein is FMN-dependent NADH:quinone oxidoreductase.